The primary structure comprises 441 residues: Arginine biosynthesis bifunctional protein ArgJ, mitochondrial (441 aa).

6 residues coordinate substrate: Thr177, Lys204, Thr215, Glu301, Asn436, and Ser441. The Nucleophile role is filled by Thr215.

It belongs to the ArgJ family. In terms of assembly, heterodimer of an alpha and a beta chain. The alpha and beta chains are autoproteolytically processed from a single precursor protein within the mitochondrion.

It localises to the mitochondrion matrix. The enzyme catalyses N(2)-acetyl-L-ornithine + L-glutamate = N-acetyl-L-glutamate + L-ornithine. It carries out the reaction L-glutamate + acetyl-CoA = N-acetyl-L-glutamate + CoA + H(+). Its pathway is amino-acid biosynthesis; L-arginine biosynthesis; L-ornithine and N-acetyl-L-glutamate from L-glutamate and N(2)-acetyl-L-ornithine (cyclic): step 1/1. The protein operates within amino-acid biosynthesis; L-arginine biosynthesis; N(2)-acetyl-L-ornithine from L-glutamate: step 1/4. Its function is as follows. Catalyzes two activities which are involved in the cyclic version of arginine biosynthesis: the synthesis of acetylglutamate from glutamate and acetyl-CoA, and of ornithine by transacetylation between acetylornithine and glutamate. This chain is Arginine biosynthesis bifunctional protein ArgJ, mitochondrial, found in Lachancea thermotolerans (strain ATCC 56472 / CBS 6340 / NRRL Y-8284) (Yeast).